Here is a 126-residue protein sequence, read N- to C-terminus: Fluoride-specific ion channel FluC (126 aa).

4 helical membrane-spanning segments follow: residues 5-25 (ILVA…GAGV), 37-57 (VAIM…VVWA), 65-85 (LSPF…AFSL), and 101-121 (LYVA…LWVA). Na(+) is bound by residues Gly-75 and Thr-78.

Belongs to the fluoride channel Fluc/FEX (TC 1.A.43) family.

It localises to the cell inner membrane. The catalysed reaction is fluoride(in) = fluoride(out). Its activity is regulated as follows. Na(+) is not transported, but it plays an essential structural role and its presence is essential for fluoride channel function. Functionally, fluoride-specific ion channel. Important for reducing fluoride concentration in the cell, thus reducing its toxicity. The polypeptide is Fluoride-specific ion channel FluC (Roseobacter denitrificans (strain ATCC 33942 / OCh 114) (Erythrobacter sp. (strain OCh 114))).